A 332-amino-acid chain; its full sequence is Glycerol-3-phosphate dehydrogenase [NAD(P)+] (332 aa).

Residues W11, R30, and K108 each coordinate NADPH. Sn-glycerol 3-phosphate is bound by residues K108, G137, and S139. A141 provides a ligand contact to NADPH. The sn-glycerol 3-phosphate site is built by K192, D245, S255, R256, and N257. K192 (proton acceptor) is an active-site residue. R256 serves as a coordination point for NADPH. The NADPH site is built by V280 and E282.

Belongs to the NAD-dependent glycerol-3-phosphate dehydrogenase family.

The protein localises to the cytoplasm. It catalyses the reaction sn-glycerol 3-phosphate + NAD(+) = dihydroxyacetone phosphate + NADH + H(+). It carries out the reaction sn-glycerol 3-phosphate + NADP(+) = dihydroxyacetone phosphate + NADPH + H(+). It participates in membrane lipid metabolism; glycerophospholipid metabolism. Functionally, catalyzes the reduction of the glycolytic intermediate dihydroxyacetone phosphate (DHAP) to sn-glycerol 3-phosphate (G3P), the key precursor for phospholipid synthesis. In Burkholderia cenocepacia (strain HI2424), this protein is Glycerol-3-phosphate dehydrogenase [NAD(P)+].